Reading from the N-terminus, the 308-residue chain is Lysophosphatidic acid receptor 6 (308 aa).

Over 1–16 (MVSSNCSTEDSFKYTL) the chain is Extracellular. An N-linked (GlcNAc...) asparagine glycan is attached at asparagine 5. Residues 17 to 43 (YGCVFSMVFVLGLIANCVAIYIFTFTL) traverse the membrane as a helical segment. At 44-52 (KVRNETTTY) the chain is on the cytoplasmic side. Residues 53 to 76 (MLNLAISDLLFVFTLPFRIYYFVV) form a helical membrane-spanning segment. Residues 77–89 (RNWPFGDVLCKIS) lie on the Extracellular side of the membrane. The cysteines at positions 86 and 165 are disulfide-linked. The chain crosses the membrane as a helical span at residues 90 to 109 (VTLFYTNMYGSILFLTCISV). Residues 110–130 (DRFLAIVHPFRSKTLRTKRNA) lie on the Cytoplasmic side of the membrane. Residues 131 to 151 (RIVCVAVWITVLAGSTPASFF) form a helical membrane-spanning segment. Over 152 to 178 (QSTNRQNNTEQRTCFENFPESTWKTYL) the chain is Extracellular. A helical transmembrane segment spans residues 179–206 (SRIVIFIEIVGFFIPLILNVTCSTMVLR). At 207–224 (TLNKPLTLSRNKLSKKKV) the chain is on the cytoplasmic side. A helical membrane pass occupies residues 225-250 (LKMIFVHLVIFCFCFVPYNITLILYS). At 251–269 (LMRTQTWINCSVVTAVRTM) the chain is on the extracellular side. Residues 270–289 (YPVTLCIAVSNCCFDPIVYY) traverse the membrane as a helical segment. Cysteine 281 carries S-palmitoyl cysteine lipidation. At 290–308 (FTSDTNSELDKKQQVHQNT) the chain is on the cytoplasmic side.

This sequence belongs to the G-protein coupled receptor 1 family. As to expression, induced in activated T-cells.

The protein resides in the cell membrane. Its function is as follows. Binds to oleoyl-L-alpha-lysophosphatidic acid (LPA). Intracellular cAMP is involved in the receptor activation. The polypeptide is Lysophosphatidic acid receptor 6 (LPAR6) (Gallus gallus (Chicken)).